A 239-amino-acid chain; its full sequence is 4-hydroxy-tetrahydrodipicolinate reductase (239 aa).

Residues 9–14 (GINGKI), 78–80 (GTT), and 104–107 (APNF) contribute to the NAD(+) site. His134 acts as the Proton donor/acceptor in catalysis. His135 lines the (S)-2,3,4,5-tetrahydrodipicolinate pocket. Lys138 (proton donor) is an active-site residue. 144 to 145 (GT) serves as a coordination point for (S)-2,3,4,5-tetrahydrodipicolinate.

It belongs to the DapB family.

It localises to the cytoplasm. The catalysed reaction is (S)-2,3,4,5-tetrahydrodipicolinate + NAD(+) + H2O = (2S,4S)-4-hydroxy-2,3,4,5-tetrahydrodipicolinate + NADH + H(+). The enzyme catalyses (S)-2,3,4,5-tetrahydrodipicolinate + NADP(+) + H2O = (2S,4S)-4-hydroxy-2,3,4,5-tetrahydrodipicolinate + NADPH + H(+). The protein operates within amino-acid biosynthesis; L-lysine biosynthesis via DAP pathway; (S)-tetrahydrodipicolinate from L-aspartate: step 4/4. Functionally, catalyzes the conversion of 4-hydroxy-tetrahydrodipicolinate (HTPA) to tetrahydrodipicolinate. The sequence is that of 4-hydroxy-tetrahydrodipicolinate reductase from Coxiella burnetii (strain CbuG_Q212) (Coxiella burnetii (strain Q212)).